A 187-amino-acid chain; its full sequence is Major allergen Equ c 1 (187 aa).

The segment at residues 1-15 (MKLLLLCLGLILVCA) is a signal peptide (or 16, or 21). Asn53 and Asn68 each carry an N-linked (GlcNAc...) asparagine glycan. A disulfide bridge links Cys83 with Cys176.

The protein belongs to the calycin superfamily. Lipocalin family. As to quaternary structure, homodimer. In terms of processing, several N-terminal ends may be due to cleavage by signal peptidase at different sites or may be generated by proteolytic processing of the secreted protein. Analysis of the sugar composition shows the presence of GalNAc, Gal, NeuAc, GlcNAc, and Man. May be also O-glycosylated. Expressed in liver and in sublingual and submaxillary salivary glands. Highly concentrated in secretory fluid such as saliva and urine as well as in hair dandruff extract.

Its subcellular location is the secreted. This is Major allergen Equ c 1 from Equus caballus (Horse).